The chain runs to 197 residues: Xanthine phosphoribosyltransferase (197 aa).

Xanthine contacts are provided by Leu-20 and Asn-27. Residue 128 to 132 (ANGQA) coordinates 5-phospho-alpha-D-ribose 1-diphosphate. Xanthine is bound at residue Lys-156.

It belongs to the purine/pyrimidine phosphoribosyltransferase family. Xpt subfamily. Homodimer.

It is found in the cytoplasm. It catalyses the reaction XMP + diphosphate = xanthine + 5-phospho-alpha-D-ribose 1-diphosphate. It participates in purine metabolism; XMP biosynthesis via salvage pathway; XMP from xanthine: step 1/1. Its function is as follows. Converts the preformed base xanthine, a product of nucleic acid breakdown, to xanthosine 5'-monophosphate (XMP), so it can be reused for RNA or DNA synthesis. This is Xanthine phosphoribosyltransferase from Bacillus cereus (strain B4264).